The sequence spans 79 residues: ATP synthase subunit c (79 aa).

Transmembrane regions (helical) follow at residues 10–30 and 52–72; these read IAGA…IGVL and FFIV…LAMY.

Belongs to the ATPase C chain family. F-type ATPases have 2 components, F(1) - the catalytic core - and F(0) - the membrane proton channel. F(1) has five subunits: alpha(3), beta(3), gamma(1), delta(1), epsilon(1). F(0) has three main subunits: a(1), b(2) and c(10-14). The alpha and beta chains form an alternating ring which encloses part of the gamma chain. F(1) is attached to F(0) by a central stalk formed by the gamma and epsilon chains, while a peripheral stalk is formed by the delta and b chains.

It localises to the cell inner membrane. F(1)F(0) ATP synthase produces ATP from ADP in the presence of a proton or sodium gradient. F-type ATPases consist of two structural domains, F(1) containing the extramembraneous catalytic core and F(0) containing the membrane proton channel, linked together by a central stalk and a peripheral stalk. During catalysis, ATP synthesis in the catalytic domain of F(1) is coupled via a rotary mechanism of the central stalk subunits to proton translocation. Its function is as follows. Key component of the F(0) channel; it plays a direct role in translocation across the membrane. A homomeric c-ring of between 10-14 subunits forms the central stalk rotor element with the F(1) delta and epsilon subunits. The sequence is that of ATP synthase subunit c from Thiobacillus denitrificans (strain ATCC 25259 / T1).